The chain runs to 513 residues: 2-isopropylmalate synthase (513 aa).

In terms of domain architecture, Pyruvate carboxyltransferase spans 5–267 (LVIFDTTLRD…ETRIDTTQIV (263 aa)). Residues Asp14, His202, His204, and Asn238 each coordinate Mn(2+). Residues 393–513 (KLVYSRVCSE…LDKVKAQGGV (121 aa)) are regulatory domain.

The protein belongs to the alpha-IPM synthase/homocitrate synthase family. LeuA type 1 subfamily. In terms of assembly, homodimer. It depends on Mn(2+) as a cofactor.

The protein localises to the cytoplasm. The enzyme catalyses 3-methyl-2-oxobutanoate + acetyl-CoA + H2O = (2S)-2-isopropylmalate + CoA + H(+). It functions in the pathway amino-acid biosynthesis; L-leucine biosynthesis; L-leucine from 3-methyl-2-oxobutanoate: step 1/4. Functionally, catalyzes the condensation of the acetyl group of acetyl-CoA with 3-methyl-2-oxobutanoate (2-ketoisovalerate) to form 3-carboxy-3-hydroxy-4-methylpentanoate (2-isopropylmalate). The polypeptide is 2-isopropylmalate synthase (Dechloromonas aromatica (strain RCB)).